The primary structure comprises 445 residues: Glutamyl-tRNA(Gln) amidotransferase subunit D (445 aa).

The Asparaginase/glutaminase domain maps to 93 to 425 (SEIKIISTGG…EKIRSLMISN (333 aa)). Catalysis depends on residues threonine 103, threonine 179, aspartate 180, and lysine 258.

This sequence belongs to the asparaginase 1 family. GatD subfamily. Heterodimer of GatD and GatE.

It catalyses the reaction L-glutamyl-tRNA(Gln) + L-glutamine + ATP + H2O = L-glutaminyl-tRNA(Gln) + L-glutamate + ADP + phosphate + H(+). Functionally, allows the formation of correctly charged Gln-tRNA(Gln) through the transamidation of misacylated Glu-tRNA(Gln) in organisms which lack glutaminyl-tRNA synthetase. The reaction takes place in the presence of glutamine and ATP through an activated gamma-phospho-Glu-tRNA(Gln). The GatDE system is specific for glutamate and does not act on aspartate. This is Glutamyl-tRNA(Gln) amidotransferase subunit D from Saccharolobus islandicus (strain M.16.27) (Sulfolobus islandicus).